Consider the following 441-residue polypeptide: Proline--tRNA ligase (441 aa).

Belongs to the class-II aminoacyl-tRNA synthetase family. ProS type 2 subfamily. In terms of assembly, homodimer.

It is found in the cytoplasm. The enzyme catalyses tRNA(Pro) + L-proline + ATP = L-prolyl-tRNA(Pro) + AMP + diphosphate. Its function is as follows. Catalyzes the attachment of proline to tRNA(Pro) in a two-step reaction: proline is first activated by ATP to form Pro-AMP and then transferred to the acceptor end of tRNA(Pro). This Bartonella tribocorum (strain CIP 105476 / IBS 506) protein is Proline--tRNA ligase.